The sequence spans 249 residues: Glucosamine-6-phosphate deaminase 2 (249 aa).

Asp67 serves as the catalytic Proton acceptor; for enolization step. Catalysis depends on Asn136, which acts as the For ring-opening step. Residue His138 is the Proton acceptor; for ring-opening step of the active site. The active-site For ring-opening step is Glu143.

The protein belongs to the glucosamine/galactosamine-6-phosphate isomerase family. NagB subfamily.

It catalyses the reaction alpha-D-glucosamine 6-phosphate + H2O = beta-D-fructose 6-phosphate + NH4(+). It participates in amino-sugar metabolism; N-acetylneuraminate degradation; D-fructose 6-phosphate from N-acetylneuraminate: step 5/5. Functionally, catalyzes the reversible isomerization-deamination of glucosamine 6-phosphate (GlcN6P) to form fructose 6-phosphate (Fru6P) and ammonium ion. Required for growth on glucosamine and also provides the majority of GlcN6P deaminase activity during growth on N-acetylglucosamine (GlcNAc). This is Glucosamine-6-phosphate deaminase 2 from Bacillus subtilis (strain 168).